We begin with the raw amino-acid sequence, 338 residues long: Glyceraldehyde-3-phosphate dehydrogenase, cytosolic (338 aa).

The segment at 2–153 (ADKKIKIGIN…YKSDLNIVSN (152 aa)) is binding to NAD. NAD(+) contacts are provided by residues 15-16 (RI) and Asp37. An external loop region spans residues 56-75 (GQWKHNELKVKDEKTLLFGE). Residue Arg84 coordinates NAD(+). Residues 154-338 (ASCTTNCLAP…VDLIIHMSKA (185 aa)) are catalytic. Residue 155–157 (SCT) coordinates D-glyceraldehyde 3-phosphate. Cys156 functions as the Nucleophile in the catalytic mechanism. 2 positions are modified to S-nitrosocysteine: Cys156 and Cys160. An S-loop region spans residues 183 to 206 (HSITATQKTVDGPSMKDWRGGRAA). Residues Thr186, 215–216 (TG), and Arg238 each bind D-glyceraldehyde 3-phosphate. Asn320 serves as a coordination point for NAD(+).

The protein belongs to the glyceraldehyde-3-phosphate dehydrogenase family. As to quaternary structure, homotetramer.

Its subcellular location is the cytoplasm. The enzyme catalyses D-glyceraldehyde 3-phosphate + phosphate + NAD(+) = (2R)-3-phospho-glyceroyl phosphate + NADH + H(+). It participates in carbohydrate degradation; glycolysis; pyruvate from D-glyceraldehyde 3-phosphate: step 1/5. Key enzyme in glycolysis that catalyzes the first step of the pathway by converting D-glyceraldehyde 3-phosphate (G3P) into 3-phospho-D-glyceroyl phosphate. Essential for the maintenance of cellular ATP levels and carbohydrate metabolism. The polypeptide is Glyceraldehyde-3-phosphate dehydrogenase, cytosolic (GAPC) (Sinapis alba (White mustard)).